A 1412-amino-acid chain; its full sequence is DNA-directed RNA polymerase subunit beta' (1412 aa).

Zn(2+) contacts are provided by Cys70, Cys72, Cys85, and Cys88. Positions 460, 462, and 464 each coordinate Mg(2+). Zn(2+) contacts are provided by Cys819, Cys893, Cys900, and Cys903. A disordered region spans residues 1393–1412 (EAFEFGTPSAPAEEPQHPAE).

The protein belongs to the RNA polymerase beta' chain family. In terms of assembly, the RNAP catalytic core consists of 2 alpha, 1 beta, 1 beta' and 1 omega subunit. When a sigma factor is associated with the core the holoenzyme is formed, which can initiate transcription. The cofactor is Mg(2+). It depends on Zn(2+) as a cofactor.

It carries out the reaction RNA(n) + a ribonucleoside 5'-triphosphate = RNA(n+1) + diphosphate. DNA-dependent RNA polymerase catalyzes the transcription of DNA into RNA using the four ribonucleoside triphosphates as substrates. In Burkholderia pseudomallei (strain 1106a), this protein is DNA-directed RNA polymerase subunit beta'.